A 514-amino-acid chain; its full sequence is MTEPNRAQAKPAAADTPAVDENKIIAERREKLAALRQQGVPFPNDFRPTHQAAALQAQYTETEQATLEAAPVEVAIAGRMMLKRVMGKASFATVQDGSGQIQFYITRDKVGEEVYAAFKHWDLGDIISARGELFRTNKGELSVQVRELRLLSKSLRPLPDKFHGLADQEMKYRQRYVDLIVSPETRNTFRARTNAISSLRRHMADAGFMEVETPMLHPIPGGAAAKPFITHHNALDMQMFMRIAPELYLKRLIVGGFERVFEINRNFRNEGVSPRHNPEFTMMEFYAAYTDYRWLMDFTEDLIRKAAIDARGSAVLTYQDRELDLSKPFHRLTICQAIQKFAPQYTDAQLADAGFLRTELKKFGVNTNAPQFLNAGLGTLQLVLFEETAENQLWEPTFIVDYPVEVSPLARASDTVPGITERFELFITGREIANGFSELNDAEDQADRFRKQVEQKDAGDEEAMYFDADYIRALEYGMPPTGGCGIGIDRLVMLLTDSPNIRDVILFPHLRRED.

Mg(2+) contacts are provided by Glu-424 and Glu-431.

It belongs to the class-II aminoacyl-tRNA synthetase family. As to quaternary structure, homodimer. The cofactor is Mg(2+).

Its subcellular location is the cytoplasm. It catalyses the reaction tRNA(Lys) + L-lysine + ATP = L-lysyl-tRNA(Lys) + AMP + diphosphate. This chain is Lysine--tRNA ligase, found in Cupriavidus necator (strain ATCC 17699 / DSM 428 / KCTC 22496 / NCIMB 10442 / H16 / Stanier 337) (Ralstonia eutropha).